The sequence spans 668 residues: Fructose-1,6-bisphosphatase class 3 (668 aa).

The protein belongs to the FBPase class 3 family. Mn(2+) serves as cofactor.

It catalyses the reaction beta-D-fructose 1,6-bisphosphate + H2O = beta-D-fructose 6-phosphate + phosphate. Its pathway is carbohydrate biosynthesis; gluconeogenesis. In Clostridium botulinum (strain Okra / Type B1), this protein is Fructose-1,6-bisphosphatase class 3.